The chain runs to 228 residues: MAGRGGTGAAEYGEEGEEEEEEEAREGGAEGSPGSKLPPIVGTASELAKRKVKKKKKKKKTKGSGKGDADKHHSRGRKNQPLSSSFHDILNPHKDHGLRAEPRDKEENRQTLPYSYSINHPCFAEIEDTLSSQINESLRWDGILTDPEAEKERIRIYKLNRRKRYRLMALKCFHSDPCVEESVENLPYLSDKDCSPCSKQPSSKGDHAHSYFEASKLLHPELATTVAE.

The tract at residues 1–108 (MAGRGGTGAA…RAEPRDKEEN (108 aa)) is disordered. Residues 12 to 24 (YGEEGEEEEEEEA) are compositionally biased toward acidic residues. The lysine-rich domain stretch occupies residues 49–71 (KRKVKKKKKKKKTKGSGKGDADK). Basic residues predominate over residues 50-63 (RKVKKKKKKKKTKG). Over residues 90 to 108 (LNPHKDHGLRAEPRDKEEN) the composition is skewed to basic and acidic residues. Residues 113–165 (PYSYSINHPCFAEIEDTLSSQINESLRWDGILTDPEAEKERIRIYKLNRRKRY) form an interaction with ATE1 region. Residues 169–178 (ALKCFHSDPC) form repeat 1.

Self-associates (via Lys-rich domain); targets LIAT1 to the nucleolus. Interacts with ATE1; it is not a substrate of ATE1, the interaction takes place in the cytoplasm and seems to increase ATE1 arginyltransferase activity. Interacts with JMJD6 and MRPS14. Post-translationally, post-translationally modified by JMJD6 lysyl-hydroxylase activity at its Lys-rich domain, which inhibits its self-association and nucleolar localization. As to expression, highly expressed in spleen, thymus, liver and brown adipose tissue. Moderately expressed in liver, testis and lung.

The protein localises to the nucleus. It localises to the nucleolus. It is found in the cytoplasm. Participates in nucleolar liquid-liquid phase separation (LLPS) through its N-terminal intrinsically disordered region (IDR). May be involved in ATE1-mediated N-terminal arginylation. This chain is Protein LIAT1, found in Mus musculus (Mouse).